Consider the following 362-residue polypeptide: Peptide chain release factor 1 (362 aa).

Q237 is modified (N5-methylglutamine). The disordered stretch occupies residues 279-305 (RLQQAEDEKRRSEEESSRRNLVASGDR). The span at 282 to 296 (QAEDEKRRSEEESSR) shows a compositional bias: basic and acidic residues.

Belongs to the prokaryotic/mitochondrial release factor family. Post-translationally, methylated by PrmC. Methylation increases the termination efficiency of RF1.

Its subcellular location is the cytoplasm. Functionally, peptide chain release factor 1 directs the termination of translation in response to the peptide chain termination codons UAG and UAA. This is Peptide chain release factor 1 from Colwellia psychrerythraea (strain 34H / ATCC BAA-681) (Vibrio psychroerythus).